Consider the following 628-residue polypeptide: Propionate--CoA ligase (628 aa).

This sequence belongs to the ATP-dependent AMP-binding enzyme family.

The catalysed reaction is propanoate + ATP + CoA = propanoyl-CoA + AMP + diphosphate. Its pathway is organic acid metabolism; propanoate degradation. Functionally, catalyzes the synthesis of propionyl-CoA from propionate and CoA. Also converts acetate to acetyl-CoA but with a lower specific activity. The protein is Propionate--CoA ligase (prpE) of Salmonella typhimurium (strain LT2 / SGSC1412 / ATCC 700720).